Reading from the N-terminus, the 344-residue chain is Nuclear distribution protein nudE homolog 1 (344 aa).

Residues 1–93 form a self-association region; sequence MEDSGKTFES…MQHSEGYRQI (93 aa). Positions 18-188 form a coiled coil; it reads WRDLAMTYKQ…ELAVQQKQDK (171 aa). Residues 88-156 form an interaction with PAFAH1B1 region; it reads EGYRQISALE…ERNAFLESEL (69 aa). The interaction with CENPF stretch occupies residues 167-290; sequence QRLKDEARDL…QSPSRTSGPA (124 aa). The disordered stretch occupies residues 181-246; the sequence is AVQQKQDKPR…DSSTSGTPLT (66 aa). Position 211 is a phosphoserine (Ser211). A phosphothreonine mark is found at Thr215 and Thr228. The residue at position 239 (Ser239) is a Phosphoserine. Thr243 and Thr246 each carry phosphothreonine. The S-palmitoyl cysteine; by ZDHHC2, ZDHHC3 and ZDHHC7 moiety is linked to residue Cys274. Residues 279–289 show a composition bias toward polar residues; that stretch reads YDQSPSRTSGP. The tract at residues 279 to 337 is disordered; the sequence is YDQSPSRTSGPASGRGTKNRDGVDRRPGSTSVGDKGSGKRLEFGKPASEPASPALPSAQ. Residue Ser282 is modified to Phosphoserine. A compositionally biased stretch (basic and acidic residues) spans 296-305; that stretch reads KNRDGVDRRP. Residue Ser309 is modified to Phosphoserine. A compositionally biased stretch (low complexity) spans 324-336; the sequence is PASEPASPALPSA.

This sequence belongs to the nudE family. Homodimer. Interacts with dynactin and PCM1. Interacts with CENPF, LIS1, CNTRL, dynein, tubulin gamma, PAFAH1B1, PCNT, SLMAP and TCP1. Interacts with ZNF365. Interacts with RAB9A; the interaction leads to RAB9A-dynein motor tethering. Interacts (via C-terminus) with MCRS1 (via C-terminus); phosphorylation of NDE1 inhibits the interaction. Phosphorylated in mitosis. Phosphorylation at Thr-246 is essential for the G2/M transition. As to expression, highly expressed in ovary. Also expressed in brain, heart, kidney, large intestine, liver, lung, small intestine and testis.

The protein localises to the cytoplasm. It localises to the cytoskeleton. The protein resides in the microtubule organizing center. Its subcellular location is the centrosome. It is found in the spindle. The protein localises to the chromosome. It localises to the centromere. The protein resides in the kinetochore. Its subcellular location is the cleavage furrow. It is found in the cytoplasmic vesicle membrane. In terms of biological role, required for centrosome duplication and formation and function of the mitotic spindle. Essential for the development of the cerebral cortex. May regulate the production of neurons by controlling the orientation of the mitotic spindle during division of cortical neuronal progenitors of the proliferative ventricular zone of the brain. Orientation of the division plane perpendicular to the layers of the cortex gives rise to two proliferative neuronal progenitors whereas parallel orientation of the division plane yields one proliferative neuronal progenitor and a postmitotic neuron. A premature shift towards a neuronal fate within the progenitor population may result in an overall reduction in the final number of neurons and an increase in the number of neurons in the deeper layers of the cortex. Acts as a RAB9A/B effector that tethers RAB9-associated late endosomes to the dynein motor for their retrograde transport to the trans-Golgi network. The chain is Nuclear distribution protein nudE homolog 1 from Mus musculus (Mouse).